A 269-amino-acid polypeptide reads, in one-letter code: 4-hydroxy-tetrahydrodipicolinate reductase (269 aa).

NAD(+) contacts are provided by residues 13 to 18 (GASGRM) and D39. R40 lines the NADP(+) pocket. Residues 101 to 103 (GTT) and 125 to 128 (APNM) each bind NAD(+). The Proton donor/acceptor role is filled by H158. Residue H159 coordinates (S)-2,3,4,5-tetrahydrodipicolinate. Residue K162 is the Proton donor of the active site. (S)-2,3,4,5-tetrahydrodipicolinate is bound at residue 168 to 169 (GT).

The protein belongs to the DapB family.

Its subcellular location is the cytoplasm. The catalysed reaction is (S)-2,3,4,5-tetrahydrodipicolinate + NAD(+) + H2O = (2S,4S)-4-hydroxy-2,3,4,5-tetrahydrodipicolinate + NADH + H(+). The enzyme catalyses (S)-2,3,4,5-tetrahydrodipicolinate + NADP(+) + H2O = (2S,4S)-4-hydroxy-2,3,4,5-tetrahydrodipicolinate + NADPH + H(+). Its pathway is amino-acid biosynthesis; L-lysine biosynthesis via DAP pathway; (S)-tetrahydrodipicolinate from L-aspartate: step 4/4. In terms of biological role, catalyzes the conversion of 4-hydroxy-tetrahydrodipicolinate (HTPA) to tetrahydrodipicolinate. The sequence is that of 4-hydroxy-tetrahydrodipicolinate reductase from Bordetella bronchiseptica (strain ATCC BAA-588 / NCTC 13252 / RB50) (Alcaligenes bronchisepticus).